A 135-amino-acid chain; its full sequence is Basic phospholipase A2 10 (135 aa).

7 cysteine pairs are disulfide-bonded: Cys28–Cys87, Cys42–Cys134, Cys44–Cys60, Cys59–Cys115, Cys66–Cys108, Cys76–Cys101, and Cys94–Cys106. The Ca(2+) site is built by Tyr43, Gly45, and Gly47. His63 is an active-site residue. A Ca(2+)-binding site is contributed by Asp64. The active site involves Asp109.

This sequence belongs to the phospholipase A2 family. Group I subfamily. D49 sub-subfamily. Requires Ca(2+) as cofactor. Expressed by the venom gland.

The protein resides in the secreted. It catalyses the reaction a 1,2-diacyl-sn-glycero-3-phosphocholine + H2O = a 1-acyl-sn-glycero-3-phosphocholine + a fatty acid + H(+). Snake venom phospholipase A2 (PLA2) that inhibits neuromuscular transmission by blocking acetylcholine release from the nerve termini. PLA2 catalyzes the calcium-dependent hydrolysis of the 2-acyl groups in 3-sn-phosphoglycerides. This Bungarus fasciatus (Banded krait) protein is Basic phospholipase A2 10.